We begin with the raw amino-acid sequence, 185 residues long: MTLAAYKEKVKELPLVSIFCSCFLSDPLKKQTYKYEADTVDLTWCAISDMEVIELNKRASGHSFEVILKPPSFDGIPEITATLPQKRDPSLEEIQKKLEAAEERRKYREAELRKHQAEKREHEREVILKAIEENNNFSKMAKEKLAQRMEVNKENREAHLAAMLERLQEKDKHAEEVRKNKEATR.

Residues S48–R185 form the SLD domain. Residues S90–R185 are a coiled coil. A disordered region spans residues E165–R185. The span at R166–R185 shows a compositional bias: basic and acidic residues.

The protein belongs to the stathmin family. In terms of tissue distribution, nervous tissue.

This Xenopus laevis (African clawed frog) protein is Stathmin-4 (stmn4).